The following is a 1400-amino-acid chain: DNA-directed RNA polymerase subunit beta' (1400 aa).

The Zn(2+) site is built by cysteine 70, cysteine 72, cysteine 85, and cysteine 88. Mg(2+) is bound by residues aspartate 460, aspartate 462, and aspartate 464. 4 residues coordinate Zn(2+): cysteine 814, cysteine 888, cysteine 895, and cysteine 898.

The protein belongs to the RNA polymerase beta' chain family. As to quaternary structure, the RNAP catalytic core consists of 2 alpha, 1 beta, 1 beta' and 1 omega subunit. When a sigma factor is associated with the core the holoenzyme is formed, which can initiate transcription. It depends on Mg(2+) as a cofactor. Requires Zn(2+) as cofactor.

The catalysed reaction is RNA(n) + a ribonucleoside 5'-triphosphate = RNA(n+1) + diphosphate. In terms of biological role, DNA-dependent RNA polymerase catalyzes the transcription of DNA into RNA using the four ribonucleoside triphosphates as substrates. The sequence is that of DNA-directed RNA polymerase subunit beta' from Methylococcus capsulatus (strain ATCC 33009 / NCIMB 11132 / Bath).